A 248-amino-acid chain; its full sequence is Triosephosphate isomerase (248 aa).

Asn-11 and Lys-13 together coordinate substrate. The active-site Electrophile is the His-95. Glu-165 acts as the Proton acceptor in catalysis.

This sequence belongs to the triosephosphate isomerase family. In terms of assembly, homodimer.

It localises to the cytoplasm. The enzyme catalyses dihydroxyacetone phosphate = methylglyoxal + phosphate. The catalysed reaction is D-glyceraldehyde 3-phosphate = dihydroxyacetone phosphate. It participates in carbohydrate degradation; glycolysis; D-glyceraldehyde 3-phosphate from glycerone phosphate: step 1/1. It functions in the pathway carbohydrate biosynthesis; gluconeogenesis. Triosephosphate isomerase is an extremely efficient metabolic enzyme that catalyzes the interconversion between dihydroxyacetone phosphate (DHAP) and D-glyceraldehyde-3-phosphate (G3P) in glycolysis and gluconeogenesis. Functionally, it is also responsible for the non-negligible production of methylglyoxal a reactive cytotoxic side-product that modifies and can alter proteins, DNA and lipids. The protein is Triosephosphate isomerase (tpi1) of Xenopus laevis (African clawed frog).